Reading from the N-terminus, the 64-residue chain is MKSTLMTASVLILVLLSIVDYASVYAEFIDSEISLERQWINACFNVCMKISSDKKYCKYLCGKN.

The first 26 residues, 1 to 26 (MKSTLMTASVLILVLLSIVDYASVYA), serve as a signal peptide directing secretion. Residues 27-36 (EFIDSEISLE) constitute a propeptide that is removed on maturation. Cystine bridges form between cysteine 43/cysteine 61 and cysteine 47/cysteine 57.

Belongs to the short scorpion toxin superfamily. Potassium channel inhibitor kappa-KTx family. Kappa-KTx 3 subfamily. Expressed by the venom gland.

The protein resides in the secreted. Its function is as follows. Potassium channel inhibitor (Kv). The sequence is that of Potassium channel toxin kappa-KTx 3.1 from Heterometrus petersii (Asian forest scorpion).